Reading from the N-terminus, the 339-residue chain is RNA 3'-terminal phosphate cyclase (339 aa).

ATP is bound by residues Gln103 and His283–Gln287. The active-site Tele-AMP-histidine intermediate is His308.

It belongs to the RNA 3'-terminal cyclase family. Type 1 subfamily.

The protein localises to the cytoplasm. It carries out the reaction a 3'-end 3'-phospho-ribonucleotide-RNA + ATP = a 3'-end 2',3'-cyclophospho-ribonucleotide-RNA + AMP + diphosphate. Functionally, catalyzes the conversion of 3'-phosphate to a 2',3'-cyclic phosphodiester at the end of RNA. The mechanism of action of the enzyme occurs in 3 steps: (A) adenylation of the enzyme by ATP; (B) transfer of adenylate to an RNA-N3'P to produce RNA-N3'PP5'A; (C) and attack of the adjacent 2'-hydroxyl on the 3'-phosphorus in the diester linkage to produce the cyclic end product. The biological role of this enzyme is unknown but it is likely to function in some aspects of cellular RNA processing. This chain is RNA 3'-terminal phosphate cyclase, found in Salmonella enteritidis PT4 (strain P125109).